Reading from the N-terminus, the 364-residue chain is Geranylgeranyl pyrophosphate synthase janG (364 aa).

Lys-83, Arg-86, and His-115 together coordinate isopentenyl diphosphate. Residues Asp-122 and Asp-126 each contribute to the Mg(2+) site. Residue Arg-131 participates in dimethylallyl diphosphate binding. Isopentenyl diphosphate is bound at residue Arg-132. Dimethylallyl diphosphate contacts are provided by Lys-209, Thr-210, and Gln-243. Asp-246 contributes to the Mg(2+) binding site. Positions 250, 260, and 270 each coordinate dimethylallyl diphosphate.

It belongs to the FPP/GGPP synthase family. Mg(2+) is required as a cofactor.

It carries out the reaction isopentenyl diphosphate + dimethylallyl diphosphate = (2E)-geranyl diphosphate + diphosphate. It catalyses the reaction isopentenyl diphosphate + (2E)-geranyl diphosphate = (2E,6E)-farnesyl diphosphate + diphosphate. The enzyme catalyses isopentenyl diphosphate + (2E,6E)-farnesyl diphosphate = (2E,6E,10E)-geranylgeranyl diphosphate + diphosphate. Its pathway is secondary metabolite biosynthesis. In terms of biological role, geranylgeranyl pyrophosphate synthase; part of the gene cluster that mediates the biosynthesis of the indole diterpenes janthitremanes such as shearinine K or shearinine A. The geranylgeranyl diphosphate (GGPP) synthase janG catalyzes the first step in janthitremane biosynthesis via conversion of farnesyl pyrophosphate and isopentyl pyrophosphate into geranylgeranyl pyrophosphate (GGPP). Condensation of indole-3-glycerol phosphate with GGPP by the prenyl transferase janC then forms 3-geranylgeranylindole (3-GGI). Epoxidation by the FAD-dependent monooxygenase janM leads to a epoxidized-GGI that is substrate of the terpene cyclase janB for cyclization to yield paspaline. Paspaline is subsequently converted to 13-desoxypaspaline by the cytochrome P450 monooxygenase janP, via beta-PC-M6 in a series of alpha-face oxidations. The cytochrome P450 monooxygenase janQ is proposed to carry out sequential beta-face oxidation steps at C-7 and C-13 of 13-desoxypaspaline to form paspalicine and paspalinine respectively. The indole diterpene prenyltransferase janD may then convert paspalinine into shearinine K which is substrate of janO and/or additional enzymes for oxidation and cyclization to generate shearinine A. The protein is Geranylgeranyl pyrophosphate synthase janG of Penicillium janthinellum (Penicillium vitale).